Here is a 2301-residue protein sequence, read N- to C-terminus: MACKHGYPDVCPICTAVDVTPGFEYLLLADGEWFPTDLLCVDLDDDVFWPSNSSNQSETMEWTDLPLVRDIVMEPQGNASSSDKSNSQSSGNEGVIINNFYSNQYQNSIDLSASGGNAGDAPQNNGQLSNILGGAANAFATMAPLLLDQNTEEMENLSDRVASDKAGNSATNTQSTVGRLCGYGEAHHGEHPASCADTATDKVLAAERYYTIDLASWTTTQEAFSHIRIPLPHVLAGEDGGVFGATLRRHYLCKTGWRVQVQCNASQFHAGSLLVFMAPEFYTGKGTKTGDMEPTDPFTMDTTWRAPQGAPTGYRYDSRTGFFAMNHQNQWQWTVYPHQILNLRTNTTVDLEVPYVNIAPTSSWTQHANWTLVVAVFSPLQYASGSSSDVQITASIQPVNPVFNGLRHETVIAQSPIAVTVREHKGCFYSTNPDTTVPIYGKTISTPNDYMCGEFSDLLELCKLPTFLGNPNSNNKRYPYFSATNSVPTTSLVDYQVALSCSCMCNSMLAAVARNFNQYRGSLNFLFVFTGAAMVKGKFLIAYTPPGAGKPTTRDQAMQATYAIWDLGLNSSFVFTAPFISPTHYRQTSYTSATIASVDGWVTVWQLTPLTYPSGAPVNSDILTLVSAGDDFTLRMPISPTKWAPQGSDNAEKGKVSNDDASVDFVAEPVKLPENQTRVAFFYDRAVPIGMLRPGQNIESTFVYQENDLRLNCLLLTPLPSFCPDSTSGPVKTKAPVQWRWVRSGGTTNFPLMTKQDYAFLCFSPFTYYKCDLEVTVSALGTDTVASVLRWAPTGAPADVTDQLIGYTPSLGETRNPHMWLVGAGNTQISFVVPYNSPLSVLPAAWFNGWSDFGNTKDFGVAPNADFGRLWIQGNTSASVRIRYKKMKVFCPRPTLFFPWPVSTRSKINADNPVPILELENPAAFYRIDLFITFIDEFITFDYKVHGRPVLTFRIPGFGLTPAGRMLVCMGEKPAHGPFTSSRSLYHVIFTATCSSFSFSIYKGRYRSWKKPIHDELVDRGYTTFGEFFRAVRAYHADYYKQRLIHDVEMNPGPVQSVFQPQGAVLTKSLAPQAGIQNLLLRLLGIDGDCSEVSKAITVVTDLFAAWERAKTTLVSPEFWSKLILKTTKFIAASVLYLHNPDFTTTVCLSLMTGVDLLTNDSVFDWLKNKLSSFFRTPPPVCPNVLQPQGPLREANEGFTFAKNIEWAMKTIQSIVNWLTSWFKQEEDHPQSKLDKFLMEFPDHCRNIMDMRNGRKAYCECTASFKYFDELYNLAVTCKRIPLASLCEKFKNRHDHSVTRPEPVVVVLRGAAGQGKSVTSQIIAQSVSKMAFGRQSVYSMPPDSEYFDGYENQFSVIMDDLGQNPDGEDFTVFCQMVSSTNFLPNMAHLERKGTPFTSSFIVATTNLPKFRPVTVAHYPAVDRRITFDFTVTAGPHCTTSNGMLDIEKAFDEIPGSKPQLACFSADCPLLHKRGVMFTCNRTKAVYNLQQVVKMVNDTITRKTENVKKMNSLVAQSPPDWEHFENILTCLRQNNAALQDQLDELQEAFAQARERSDFLSDWLKVSAIIFAGIASLSAVIKLASKFKESIWPSPVRVELSEGEQAAYAGRARAQKQALQVLDIQGGGKVLAQAGNPVMDFELFCAKNMVAPITFYYPDKAEVTQSCLLLRAHLFVVNRHVAETEWTAFKLKDVRHERDTVVTRSVNRSGAETDLTFIKVTKGPLFKDNVNKFCSNKDDFPARNDAVTGIMNTGLAFVYSGNFLIGNQPVNTTTGACFNHCLHYRAQTRRGWCGSAVICNVNGKKAVYGMHSAGGGGLAAATIITRELIEAAEKSMLALEPQGAIVDISTGSVVHVPRKTKLRRTVAHDVFQPKFEPAVLSRYDPRTDKDVDVVAFSKHTTNMESLPPVFDIVCDEYANRVFTILGKDNGLLTVEQAVLGLPGMDPMEKDTSPGLPYTQQGLRRTDLLNFNTAKMTPQLDYAHSKLVLGVYDDVVYQSFLKDEIRPLEKIHEAKTRIVDVPPFAHCIWGRQLLGRFASKFQTKPGLELGSAIGTDPDVDWTPYAAELSGFNYVYDVDYSNFDASHSTAMFECLIKNFFTEQNGFDRRIAEYLRSLAVSRHAYEDRRVLIRGGLLSGCAATSMLNTIMNNVIIRAALYLTYSNFEFDDIKVLSYGDDLLIGTNYQIDFNLVKERLAPFGYKITPANKTTTFPLTSHLQDVTFLKRRFVRFNSYLFRPQMDAVNLKAMVSYCKPGTLKEKLMSIALLAVHSGPDIYDEIFLPFRNVGIVVPTYSSMLYRWLSLFR.

A zinc finger lies at 3-14; it reads CKHGYPDVCPIC. An acidic region spans residues 30 to 46; the sequence is DGEWFPTDLLCVDLDDD. Positions 60-73 are theilo; the sequence is MEWTDLPLVRDIVM. Gly-77 is lipidated: N-myristoyl glycine; by host. The cysteines at positions 501 and 503 are disulfide-linked. The host EIF4E binding stretch occupies residues 1039-1045; sequence YYKQRLI. An SF3 helicase domain is found at 1281–1446; the sequence is IPLASLCEKF…CTTSNGMLDI (166 aa). An ATP-binding site is contributed by 1310 to 1317; that stretch reads GAAGQGKS. Residue Tyr-1606 is modified to O-(5'-phospho-RNA)-tyrosine. A Peptidase C3 domain is found at 1634-1827; it reads NPVMDFELFC…AATIITRELI (194 aa). Active-site for protease 3C activity residues include His-1678, Asp-1712, and Cys-1791. Residues 2069-2187 enclose the RdRp catalytic domain; the sequence is NYVYDVDYSN…GTNYQIDFNL (119 aa). Active-site for RdRp activity residues include Asp-2075 and Asp-2173.

It belongs to the picornaviruses polyprotein family. As to quaternary structure, interacts with host EIF4E. Interacts with the leader protein. Interacts with host RAN; the complex L-RAN recruits cellular kinases responsible for the L-induced nucleocytoplasmic trafficking inhibition. The complex L-RAN can further bind to the host exportins XPO1/CRM1 and CSE1L/CAS. Interacts with the protein 2A. Interacts with host RNASEL; this interaction prevents RNASEL activation by its substrate 2'-5' oligoadenylates. Phosphorylated. In terms of processing, specific enzymatic cleavages by the viral protease in vivo yield a variety of precursors and mature proteins. The polyprotein seems to be cotranslationally cleaved at the 2A/2B junction by a ribosomal skip from one codon to the next without formation of a peptide bond. This process would release the P1-2A peptide from the translational complex. Post-translationally, during virion maturation, immature virions are rendered infectious following cleavage of VP0 into VP4 and VP2. This maturation seems to be an autocatalytic event triggered by the presence of RNA in the capsid and is followed by a conformational change of the particle. Uridylylated by the polymerase and is covalently linked to the 5'-end of genomic RNA. This uridylylated form acts as a nucleotide-peptide primer for the polymerase. In terms of processing, myristoylation is required during RNA encapsidation and formation of the mature virus particle.

Its subcellular location is the virion. The protein resides in the host cytoplasm. It is found in the host nucleus. The protein localises to the host nucleolus. It localises to the host cytoplasmic vesicle membrane. The catalysed reaction is RNA(n) + a ribonucleoside 5'-triphosphate = RNA(n+1) + diphosphate. It carries out the reaction ATP + H2O = ADP + phosphate + H(+). The enzyme catalyses Selective cleavage of Gln-|-Gly bond in the poliovirus polyprotein. In other picornavirus reactions Glu may be substituted for Gln, and Ser or Thr for Gly.. Forms a complex with host RAN and probably binds to exportins carrying activated MAPK in order to mediate the hyperphosphorylation of host Phe/Gly containing nuclear pore proteins (Nups) resulting in cessation of active nucleocytoplasmic transport. Proteins with NLS signals fail to import, cellular mRNAs fail to export, and some proteins small enough for diffusion are not retained anymore (efflux). The resulting inhibition of cellular protein synthesis serves to ensure maximal viral gene expression and to evade host immune response. The leader protein also inhibits host interferon regulatory factor 3 (IRF3) dimerization, thereby blocking the transcriptional activation of IFN genes. Binds to host RNase L thereby preventing its activation by 2'-5' oligoadenylates in order to counteract the antiviral interferon-inducible OAS/RNase L pathway. Functionally, forms an icosahedral capsid of pseudo T=3 symmetry with capsid proteins VP2 and VP3. Together they form an icosahedral capsid composed of 60 copies of each VP1, VP2, and VP3, with a diameter of approximately 300 Angstroms. VP4 lies on the inner surface of the protein shell formed by VP1, VP2 and VP3. All the three latter proteins contain a beta-sheet structure called beta-barrel jelly roll. VP1 is situated at the 12 fivefold axes, whereas VP2 and VP3 are located at the quasi-sixfold axes. Its function is as follows. Lies on the inner surface of the capsid shell. After binding to the host receptor, the capsid undergoes conformational changes. Capsid protein VP4 is released, capsid protein VP1 N-terminus is externalized, and together, they shape a pore in the host membrane through which the viral genome is translocated into the host cell cytoplasm. After genome has been released, the channel shrinks. In terms of biological role, VP0 precursor is a component of immature procapsids. Involved in host translation shutoff by inhibiting cap-dependent mRNA translation. Nuclear localization is required for this function. The resulting inhibition of cellular protein synthesis serves to ensure maximal viral gene expression and to evade host immune response. Inhibits the phosphorylation of the leader protein. Functionally, affects membrane integrity and causes an increase in membrane permeability. Its function is as follows. Associates with and induces structural rearrangements of intracellular membranes. It displays RNA-binding, nucleotide binding and NTPase activities. In terms of biological role, serves as membrane anchor via its hydrophobic domain. Forms a primer, VPg-pU, which is utilized by the polymerase for the initiation of RNA chains. Functionally, cysteine protease that generates mature viral proteins from the precursor polyprotein. In addition to its proteolytic activity, it binds to viral RNA, and thus influences viral genome replication. RNA and substrate cooperatively bind to the protease. Cleaves host PABP1, this cleavage is important for viral replication. Its function is as follows. Replicates the genomic and antigenomic RNAs by recognizing replications specific signals. Performs VPg uridylylation. The polypeptide is Genome polyprotein (Theiler's murine encephalomyelitis virus (strain DA) (TMEV)).